The sequence spans 518 residues: Arginyl-tRNA--protein transferase 1 (518 aa).

Residues 149 to 165 are compositionally biased toward basic and acidic residues; the sequence is ESLQSEGKNSKKEEPHE. A disordered region spans residues 149 to 207; it reads ESLQSEGKNSKKEEPHELLQSQDSVGEKLGSGEPSHSVKVHTVPKPGKGADLSKPPCRK. Position 169 is a phosphoserine (Ser-169).

It belongs to the R-transferase family. Monomer. Interacts with LIAT1; LIAT1 is not a substrate of ATE1, the interaction takes place in the cytoplasm and seems to increase ATE1 arginyltransferase activity.

Its subcellular location is the nucleus. The protein resides in the cytoplasm. It carries out the reaction an N-terminal L-alpha-aminoacyl-[protein] + L-arginyl-tRNA(Arg) = an N-terminal L-arginyl-L-aminoacyl-[protein] + tRNA(Arg) + H(+). Involved in the post-translational conjugation of arginine to the N-terminal aspartate or glutamate of a protein. This arginylation is required for degradation of the protein via the ubiquitin pathway. Does not arginylate cysteine residues. This is Arginyl-tRNA--protein transferase 1 (ATE1) from Macaca fascicularis (Crab-eating macaque).